A 487-amino-acid chain; its full sequence is Chromosomal replication initiator protein DnaA (487 aa).

Residues 1–79 form a domain I, interacts with DnaA modulators region; that stretch reads MEKSKNIWSL…GYNNIVIVFT (79 aa). The segment at 79 to 142 is domain II; it reads TNQPPKTHSN…EEEPTNFKNP (64 aa). Residues 143–359 are domain III, AAA+ region; the sequence is FLKKRYTFEN…AAVTKLKAYI (217 aa). 4 residues coordinate ATP: Gly-187, Gly-189, Lys-190, and Thr-191. The domain IV, binds dsDNA stretch occupies residues 360–487; it reads DLDNIEIDIE…TELMNKIKKN (128 aa).

Belongs to the DnaA family. As to quaternary structure, oligomerizes as a right-handed, spiral filament on DNA at oriC.

Its subcellular location is the cytoplasm. Functionally, plays an essential role in the initiation and regulation of chromosomal replication. ATP-DnaA binds to the origin of replication (oriC) to initiate formation of the DNA replication initiation complex once per cell cycle. Binds the DnaA box (a 9 base pair repeat at the origin) and separates the double-stranded (ds)DNA. Forms a right-handed helical filament on oriC DNA; dsDNA binds to the exterior of the filament while single-stranded (ss)DNA is stabiized in the filament's interior. The ATP-DnaA-oriC complex binds and stabilizes one strand of the AT-rich DNA unwinding element (DUE), permitting loading of DNA polymerase. After initiation quickly degrades to an ADP-DnaA complex that is not apt for DNA replication. Binds acidic phospholipids. In Borreliella burgdorferi (strain ZS7) (Borrelia burgdorferi), this protein is Chromosomal replication initiator protein DnaA.